A 50-amino-acid chain; its full sequence is Photosystem II reaction center protein M (50 aa).

Residues 7 to 27 (GFVASLLFVGIPTIFLIGLFI) form a helical membrane-spanning segment.

This sequence belongs to the PsbM family. In terms of assembly, PSII is composed of 1 copy each of membrane proteins PsbA, PsbB, PsbC, PsbD, PsbE, PsbF, PsbH, PsbI, PsbJ, PsbK, PsbL, PsbM, PsbT, PsbX, PsbY, Psb30/Ycf12, peripheral proteins PsbO, CyanoQ (PsbQ), PsbU, PsbV and a large number of cofactors. It forms dimeric complexes.

Its subcellular location is the cellular thylakoid membrane. One of the components of the core complex of photosystem II (PSII). PSII is a light-driven water:plastoquinone oxidoreductase that uses light energy to abstract electrons from H(2)O, generating O(2) and a proton gradient subsequently used for ATP formation. It consists of a core antenna complex that captures photons, and an electron transfer chain that converts photonic excitation into a charge separation. This subunit is found at the monomer-monomer interface. This Prochlorococcus marinus subsp. pastoris (strain CCMP1986 / NIES-2087 / MED4) protein is Photosystem II reaction center protein M.